A 501-amino-acid polypeptide reads, in one-letter code: Zinc-binding lipoprotein AdcA (501 aa).

The signal sequence occupies residues 1–18 (MKKISLLLASLCALFLVA). Residue C19 is the site of N-palmitoyl cysteine attachment. The S-diacylglycerol cysteine moiety is linked to residue C19. H63 contributes to the Zn(2+) binding site. Residues 116 to 136 (LPGGEEEEGDHDHGEEGHHHE) are disordered. The tract at residues 120–136 (EEEEGDHDHGEEGHHHE) is his-rich loop. Over residues 125-136 (DHDHGEEGHHHE) the composition is skewed to basic and acidic residues. Residues H140, H204, and E279 each coordinate Zn(2+).

The protein belongs to the bacterial solute-binding protein 9 family.

The protein resides in the cell membrane. Part of the ATP-binding cassette (ABC) transport system AdcABC involved in zinc import. Binds zinc with high affinity and specificity and delivers it to the membrane permease for translocation into the cytoplasm. This chain is Zinc-binding lipoprotein AdcA (adcA), found in Streptococcus pneumoniae serotype 4 (strain ATCC BAA-334 / TIGR4).